We begin with the raw amino-acid sequence, 485 residues long: NADH-quinone oxidoreductase subunit N (485 aa).

Helical transmembrane passes span 8-28 (LIAL…MLCI), 35-55 (FVNA…LYFV), 75-95 (FYTG…YPWL), 105-125 (FYLL…ANHL), 127-147 (SLFI…GYAF), 159-179 (YMLL…LIYA), 203-223 (LLAG…LVPF), 235-255 (PAPV…GAVM), 271-291 (IVLS…AVSQ), 297-317 (LLGY…IAVQ), 326-346 (VGVY…VVSL), 374-394 (AVMT…GFFG), 407-426 (LWWL…YYYL), and 449-469 (ALTA…FFGL).

This sequence belongs to the complex I subunit 2 family. In terms of assembly, NDH-1 is composed of 13 different subunits. Subunits NuoA, H, J, K, L, M, N constitute the membrane sector of the complex.

Its subcellular location is the cell inner membrane. It carries out the reaction a quinone + NADH + 5 H(+)(in) = a quinol + NAD(+) + 4 H(+)(out). NDH-1 shuttles electrons from NADH, via FMN and iron-sulfur (Fe-S) centers, to quinones in the respiratory chain. The immediate electron acceptor for the enzyme in this species is believed to be ubiquinone. Couples the redox reaction to proton translocation (for every two electrons transferred, four hydrogen ions are translocated across the cytoplasmic membrane), and thus conserves the redox energy in a proton gradient. This is NADH-quinone oxidoreductase subunit N from Pectobacterium atrosepticum (strain SCRI 1043 / ATCC BAA-672) (Erwinia carotovora subsp. atroseptica).